A 348-amino-acid polypeptide reads, in one-letter code: Rhodopsin (348 aa).

The Extracellular segment spans residues 1–33 (TEGPYFYVPMVNTTGIVRSPYEYPQYYLVNPAA). Residue N12 is glycosylated (N-linked (GlcNAc...) asparagine). The helical transmembrane segment at 34–58 (YAVLGAYMFFLIILGFPINFLTLYV) threads the bilayer. Residues 59 to 70 (TLEHKKLRTPLN) lie on the Cytoplasmic side of the membrane. The chain crosses the membrane as a helical span at residues 71–93 (YILLNLAVADLFMVIGGFTTTMY). The Extracellular segment spans residues 94–107 (SSMHGYFVLGRLGC). A disulfide bond links C107 and C184. Residues 108-130 (NLEGFSATLGGMISLWSLAVLAI) form a helical membrane-spanning segment. The short motif at 131–133 (ERW) is the 'Ionic lock' involved in activated form stabilization element. Topologically, residues 131 to 149 (ERWVVVCKPISNFRFGENH) are cytoplasmic. The helical transmembrane segment at 150-170 (AIMGVSLTWTMALACTVPPLV) threads the bilayer. Residues 171–199 (GWSRYIPEGMQCSCGIDYYTRAEGFNNES) lie on the Extracellular side of the membrane. A glycan (N-linked (GlcNAc...) asparagine) is linked at N197. Residues 200–221 (FVLYMFFCHFMVPLIIIFFCYG) traverse the membrane as a helical segment. At 222 to 249 (RLLCAVKEAAAAQQESETTQRAEREVTR) the chain is on the cytoplasmic side. The helical transmembrane segment at 250–271 (MVILMVIGYLVCWLPYASVAWF) threads the bilayer. Topologically, residues 272–283 (IFTHQGSEFGPL) are extracellular. The helical transmembrane segment at 284-305 (FMTIPAFFAKSSSIYNPVIYIC) threads the bilayer. K293 bears the N6-(retinylidene)lysine mark. At 306–348 (MNKQFRNCMITTLFCGKNPFEGEEEGASSTKTEASSASSVSPA) the chain is on the cytoplasmic side. Residue C320 is the site of S-palmitoyl cysteine attachment. A disordered region spans residues 327–348 (GEEEGASSTKTEASSASSVSPA). Residues 332–348 (ASSTKTEASSASSVSPA) are compositionally biased toward low complexity.

The protein belongs to the G-protein coupled receptor 1 family. Opsin subfamily. Phosphorylated on some or all of the serine and threonine residues present in the C-terminal region. Post-translationally, contains one covalently linked retinal chromophore.

It localises to the membrane. It is found in the cell projection. Its subcellular location is the cilium. The protein resides in the photoreceptor outer segment. In terms of biological role, photoreceptor required for image-forming vision at low light intensity. While most salt water fish species use retinal as chromophore, most freshwater fish use 3-dehydroretinal, or a mixture of retinal and 3-dehydroretinal. Light-induced isomerization of 11-cis to all-trans retinal triggers a conformational change that activates signaling via G-proteins. Subsequent receptor phosphorylation mediates displacement of the bound G-protein alpha subunit by arrestin and terminates signaling. The polypeptide is Rhodopsin (rho) (Neoniphon argenteus (Clearfin squirrelfish)).